Reading from the N-terminus, the 101-residue chain is MLVFLHAVFVTVLILLLIGRLQLLERLLLNHSLNLKTVNNVLGVTDTGLKVNCLQLLKPDCLDFNILYRSLAETRLLKVVLRVIFLVLLGFCCHRLLVTLF.

Positions 1–23 (MLVFLHAVFVTVLILLLIGRLQL) are cleaved as a signal peptide. The helical transmembrane segment at 81-101 (LRVIFLVLLGFCCHRLLVTLF) threads the bilayer.

Belongs to the coronaviruses ns7/ns7a protein family.

The protein localises to the host membrane. Its function is as follows. May function in the formation of membrane-bound replication complexes or in the assembly of the virus. In Canis lupus familiaris (Dog), this protein is Non-structural protein 7a.